The primary structure comprises 900 residues: Zinc finger protein 62 homolog (900 aa).

The disordered stretch occupies residues 1-97 (MSHLKTSTED…EASEKSLHLS (97 aa)). K5 participates in a covalent cross-link: Glycyl lysine isopeptide (Lys-Gly) (interchain with G-Cter in SUMO2). The span at 9–18 (EDEEPTEEYE) shows a compositional bias: acidic residues. The segment covering 47–73 (SKVENQQKKPVENRMKEDKSSIREAIS) has biased composition (basic and acidic residues). Residues K48, K62, K65, K82, and K92 each participate in a glycyl lysine isopeptide (Lys-Gly) (interchain with G-Cter in SUMO2) cross-link. Basic and acidic residues predominate over residues 83 to 94 (TEQEGEASEKSL). C2H2-type zinc fingers lie at residues 225-247 (CKCDECGKSFNYSSVLDQHKRIH), 253-275 (YECGECGKAFRNSSGLRVHKRIH), 281-303 (YECDICGKTFSNSSGLRVHKRIH), 309-331 (YECDECGKAFITCRTLLNHKSIH), 337-359 (YKCDECEKSFNYSSLLIQHKVIH), 365-387 (YECDECGKAFRNSSGLIVHKRIH), 393-415 (YKCDVCGKAFSYSSGLAVHKSIH), 421-443 (HECKECGKSFSYNSLLLQHRTIH), 449-471 (YVCDVCGKTFRNNAGLKVHRRLH), 477-499 (YKCDVCGKAYISRSSLKNHKGIH), 505-527 (YKCSYCEKSFNYSSALEQHKRIH), 533-555 (FGCDECGKAFRNNSGLKVHKRIH), and 561-583 (YKCEECGKAYISLSSLINHKSVH). K587 is covalently cross-linked (Glycyl lysine isopeptide (Lys-Gly) (interchain with G-Cter in SUMO2)). 10 C2H2-type zinc fingers span residues 589 to 611 (FKCDECEKAFITYRTLTNHKKVH), 617 to 639 (YKCDVCEKSFNYTSLLSQHRRVH), 645 to 667 (YECDRCEKVFRNNSSLKVHKRIH), 673 to 695 (YECDVCGKAYISHSSLINHKSTH), 701 to 723 (HTCDECGKAFFSSRTLISHKRVH), 729 to 751 (FKCVECGKSFSYSSLLSQHKRIH), 757 to 779 (YVCDRCGKAFRNSSGLTVHKRIH), 785 to 807 (YECDECGKAYISHSSLINHKSVH), 813 to 834 (YNCECGKSFNYRSVLDQHKRIH), and 840 to 862 (YRCNECGKAFNIRSNLTKHKRTH). A Glycyl lysine isopeptide (Lys-Gly) (interchain with G-Cter in SUMO2) cross-link involves residue K748. K882 is covalently cross-linked (Glycyl lysine isopeptide (Lys-Gly) (interchain with G-Cter in SUMO2)).

It belongs to the krueppel C2H2-type zinc-finger protein family.

Its subcellular location is the nucleus. Functionally, may play a role in differentiating skeletal muscle. This Homo sapiens (Human) protein is Zinc finger protein 62 homolog (ZFP62).